We begin with the raw amino-acid sequence, 418 residues long: Putative ion-transport protein YfeO (418 aa).

12 consecutive transmembrane segments (helical) span residues 10–30, 54–74, 99–119, 120–140, 149–169, 186–206, 223–243, 258–278, 300–320, 322–342, 343–363, and 371–391; these read LLLSLPAVAIGIASSLILIVV, DSPIWIIGVLTLTGIAVGLVI, ALPGLIVALILGLAGGVSLGP, EHPIMTVNIALAVAIGARLLP, ILASAGTIGALFGTPVAAALI, LFAPLMAAAAGALTTGLFFHP, ILSGAIVAAIAIAAGMVAVWC, VLVLGIGGFILGILGVIGGPV, DYFLLAVIKLAALVVAAASGF, GGRIFPAVFVGVALGLMLHEH, VPAVPAAITVSCAILGIVLVV, and LFMAAVVVPNTTLLPLLCIVM.

This sequence belongs to the chloride channel (TC 2.A.49) family.

It is found in the cell membrane. The polypeptide is Putative ion-transport protein YfeO (Shigella sonnei (strain Ss046)).